Reading from the N-terminus, the 419-residue chain is Acyl-coenzyme A thioesterase 1 (419 aa).

Active-site charge relay system residues include Ser232, Asp324, and His358. The residue at position 416 (Ser416) is a Phosphoserine.

Belongs to the C/M/P thioester hydrolase family. As to quaternary structure, monomer. As to expression, expressed in heart, kidney, brown adipose tissue, white adipose tissue, adrenal gland and muscle.

The protein resides in the cytoplasm. It is found in the cytosol. It catalyses the reaction hexadecanoyl-CoA + H2O = hexadecanoate + CoA + H(+). The catalysed reaction is decanoyl-CoA + H2O = decanoate + CoA + H(+). The enzyme catalyses dodecanoyl-CoA + H2O = dodecanoate + CoA + H(+). It carries out the reaction tetradecanoyl-CoA + H2O = tetradecanoate + CoA + H(+). It catalyses the reaction octadecanoyl-CoA + H2O = octadecanoate + CoA + H(+). The catalysed reaction is eicosanoyl-CoA + H2O = eicosanoate + CoA + H(+). The enzyme catalyses (9Z)-octadecenoyl-CoA + H2O = (9Z)-octadecenoate + CoA + H(+). It carries out the reaction (9Z)-hexadecenoyl-CoA + H2O = (9Z)-hexadecenoate + CoA + H(+). It catalyses the reaction (9E)-octadecenoyl-CoA + H2O = (9E)-octadecenoate + CoA + H(+). The protein operates within lipid metabolism; fatty acid metabolism. Its function is as follows. Catalyzes the hydrolysis of acyl-CoAs into free fatty acids and coenzyme A (CoASH), regulating their respective intracellular levels. More active towards saturated and unsaturated long chain fatty acyl-CoAs (C12-C20). This is Acyl-coenzyme A thioesterase 1 (Acot1) from Mus musculus (Mouse).